The chain runs to 294 residues: 2-oxoglutaramate amidase (294 aa).

The region spanning 16 to 261 (LDVAAVQVKF…EAVLRATLNF (246 aa)) is the CN hydrolase domain. Residue glutamate 55 is the Proton acceptor of the active site. The active-site Proton donor is the lysine 129. The active-site Nucleophile is cysteine 168.

This sequence belongs to the carbon-nitrogen hydrolase superfamily. NIT1/NIT2 family.

The enzyme catalyses 2-oxoglutaramate + H2O = 2-oxoglutarate + NH4(+). Its pathway is alkaloid degradation; nicotine degradation. In terms of biological role, catalyzes the conversion of 2-oxoglutaramate to 2-oxoglutarate. Together with glutamate dehydrogenase, may form a physiologically relevant enzyme couple, leading to transformation of metabolically inert 2-oxoglutaramate derived from trihydroxypyridine into glutamate, a central compound of nitrogen metabolism. The protein is 2-oxoglutaramate amidase of Paenarthrobacter nicotinovorans (Arthrobacter nicotinovorans).